The primary structure comprises 115 residues: Somatostatin-1 (115 aa).

The N-terminal stretch at 1-24 (MQSCRVQCALTLLSLALAINSISA) is a signal peptide. Residues 25 to 99 (APTDPRLRQF…NSSPALAPRE (75 aa)) constitute a propeptide that is removed on maturation. Residues 60 to 79 (SQTDNEALESDDLPRGAEQD) are disordered. Residues C104 and C115 are joined by a disulfide bond.

It belongs to the somatostatin family.

It is found in the secreted. Somatostatin inhibits the release of somatotropin. The protein is Somatostatin-1 (sst1) of Pelophylax ridibundus (Marsh frog).